Consider the following 414-residue polypeptide: Protein IQ-DOMAIN 8 (414 aa).

The Nuclear localization signal 1 motif lies at 14 to 21 (NKKNITDD). Residues 40–61 (LISSSKGFKSRGGSYGTPSLGS) are disordered. IQ domains follow at residues 92–120 (REWA…AVVR), 121–143 (IQAI…CMQA), and 144–169 (LVRV…EKPS). Positions 119–132 (VRIQAIFRGRQVRK) are calmodulin-binding. Disordered regions lie at residues 156–190 (NRGP…SPGS), 218–244 (HQPR…SCKS), and 262–329 (GRLM…SGSF). The span at 164–184 (ELEKPSDQQKDDPAKQAEKGW) shows a compositional bias: basic and acidic residues. Positions 231–244 (KQGSVKKNNGSCKS) are enriched in polar residues. Residues 274–289 (NARKSESSVSEHDTVQ) are compositionally biased toward basic and acidic residues. Low complexity predominate over residues 307–328 (SSSATSSESSSTSQSPVPFSGS). Positions 336–343 (YRKPSYMS) match the Nuclear localization signal 2 motif. The segment at 347 to 398 (SIKAKQRRSGSSSSCSKTPFEKKQSMSYNGDVNVRRSAGSDPLNNQWTDLYP) is disordered.

This sequence belongs to the IQD family. In terms of assembly, binds to multiple calmodulin (CaM) in the presence of Ca(2+) and CaM-like proteins.

The protein resides in the nucleus. Its subcellular location is the cytoplasm. The protein localises to the cytoskeleton. It localises to the nucleus envelope. Functionally, may be involved in cooperative interactions with calmodulins or calmodulin-like proteins. Recruits calmodulin proteins to microtubules, thus being a potential scaffold in cellular signaling and trafficking. May associate with nucleic acids and regulate gene expression at the transcriptional or post-transcriptional level. This chain is Protein IQ-DOMAIN 8, found in Arabidopsis thaliana (Mouse-ear cress).